We begin with the raw amino-acid sequence, 332 residues long: GTP 3',8-cyclase (332 aa).

The Radical SAM core domain occupies 7–221 (QYERLHDYVR…FDLCKQAGLD (215 aa)). R16 is a GTP binding site. 2 residues coordinate [4Fe-4S] cluster: C23 and C27. Residue Y29 participates in S-adenosyl-L-methionine binding. C30 serves as a coordination point for [4Fe-4S] cluster. R66 contributes to the GTP binding site. Residue G70 participates in S-adenosyl-L-methionine binding. A GTP-binding site is contributed by T97. S121 contacts S-adenosyl-L-methionine. K158 lines the GTP pocket. M192 serves as a coordination point for S-adenosyl-L-methionine. 2 residues coordinate [4Fe-4S] cluster: C256 and C259. GTP is bound at residue 261 to 263 (RLR). [4Fe-4S] cluster is bound at residue C273.

This sequence belongs to the radical SAM superfamily. MoaA family. In terms of assembly, monomer and homodimer. [4Fe-4S] cluster serves as cofactor.

It catalyses the reaction GTP + AH2 + S-adenosyl-L-methionine = (8S)-3',8-cyclo-7,8-dihydroguanosine 5'-triphosphate + 5'-deoxyadenosine + L-methionine + A + H(+). Its pathway is cofactor biosynthesis; molybdopterin biosynthesis. Its function is as follows. Catalyzes the cyclization of GTP to (8S)-3',8-cyclo-7,8-dihydroguanosine 5'-triphosphate. This Limosilactobacillus fermentum (strain NBRC 3956 / LMG 18251) (Lactobacillus fermentum) protein is GTP 3',8-cyclase.